The sequence spans 446 residues: MREILHIQGGQCGNQIGSKFWEVVCDEHGIDPTGRYVGTSDLQLERVNVYYNEASCGRFVPRAVLMDLEPGTMDSVRTGPYGQIFRPDNFVFGQSGAGNNWAKGHYTEGAELIDSVLDVVRKEAENCDCLQGFQVCHSLGGGTGSGMGTLLISKIREEYPDRMMLTFSVFPSPKVSDTVVEPYNATLSVHQLVENADECMVLDNEALYDICFRTLKLTTPSFGDLNHLISATMSGVTCCLRFPGQLNSDLRKLAVNLIPFPRLHFFMVGFAPLTSRGSQQYRALTVPELTQQMWDAKNMMCAADPRHGRYLTASAMFRGKMSTKEVDEQMINVQNKNSSYFVEWIPNNVKSSVCDIPPRGLSMASTFIGNSTSIQEMFRRVSEQFTAMFRRKAFLHWYTGEGMDEMEFTEAESNMNDLVSEYQQYQDATADEEGDYEDEDEALHDE.

Residues Gln11, Glu69, Ser138, Gly142, Thr143, Gly144, Asn204, and Asn226 each contribute to the GTP site. Glu69 serves as a coordination point for Mg(2+). The segment covering 417-426 (DLVSEYQQYQ) has biased composition (polar residues). A disordered region spans residues 417–446 (DLVSEYQQYQDATADEEGDYEDEDEALHDE). The span at 429 to 446 (TADEEGDYEDEDEALHDE) shows a compositional bias: acidic residues.

Belongs to the tubulin family. In terms of assembly, dimer of alpha and beta chains. A typical microtubule is a hollow water-filled tube with an outer diameter of 25 nm and an inner diameter of 15 nM. Alpha-beta heterodimers associate head-to-tail to form protofilaments running lengthwise along the microtubule wall with the beta-tubulin subunit facing the microtubule plus end conferring a structural polarity. Microtubules usually have 13 protofilaments but different protofilament numbers can be found in some organisms and specialized cells. It depends on Mg(2+) as a cofactor.

It localises to the cytoplasm. Its subcellular location is the cytoskeleton. Tubulin is the major constituent of microtubules, a cylinder consisting of laterally associated linear protofilaments composed of alpha- and beta-tubulin heterodimers. Microtubules grow by the addition of GTP-tubulin dimers to the microtubule end, where a stabilizing cap forms. Below the cap, tubulin dimers are in GDP-bound state, owing to GTPase activity of alpha-tubulin. In Eleusine indica (Goosegrass), this protein is Tubulin beta-4 chain (TUBB4).